A 64-amino-acid polypeptide reads, in one-letter code: uncharacterized protein (64 aa).

Residues 35-64 are disordered; it reads TIRKPPIEHAAGPLGSTSRAGHRSYGGVAS.

This is an uncharacterized protein from Mycobacterium tuberculosis (strain ATCC 25618 / H37Rv).